The following is a 378-amino-acid chain: Probable protein phosphatase 2C 55 (378 aa).

Disordered regions lie at residues 1 to 59 and 79 to 115; these read MRRH…ASKG and EGEA…GVGC. Positions 7-26 are enriched in low complexity; the sequence is LGLLRRAAASSTSAASSRAG. Basic residues predominate over residues 92-104; the sequence is GGRRGRNSKRQPP. The PPM-type phosphatase domain occupies 122–369; that stretch reads SWGYSSFQGR…DNVTCIVLQF (248 aa). The Mn(2+) site is built by Asp-158, Gly-159, Asp-321, and Asp-360.

It belongs to the PP2C family. Mg(2+) serves as cofactor. Mn(2+) is required as a cofactor.

The enzyme catalyses O-phospho-L-seryl-[protein] + H2O = L-seryl-[protein] + phosphate. The catalysed reaction is O-phospho-L-threonyl-[protein] + H2O = L-threonyl-[protein] + phosphate. This Oryza sativa subsp. japonica (Rice) protein is Probable protein phosphatase 2C 55.